A 175-amino-acid polypeptide reads, in one-letter code: RRDQYPRDRDQYSMIGRDRDKYSMIGRDRDQYNMYGRDYSKSRQIAKAVTAVTAGGSLLVLSSLTLVGTVIALTVATPLLVIFSPILVPALITVALLITGFLSSGGFGIAAITVFSWIYKYATGEHPQGSDKLDSARMKLGGKVQDMKDRAQYYGQQQTGGEDDRDRTRGTQHTT.

The polar stretch occupies residues 1 to 47 (RRDQYPRDRDQYSMIGRDRDKYSMIGRDRDQYNMYGRDYSKSRQIAK). 2 consecutive repeats follow at residues 17–26 (RDRDKYSMIG) and 27–36 (RDRDQYNMYG). A hydrophobic region spans residues 48-119 (AVTAVTAGGS…AAITVFSWIY (72 aa)). The next 3 helical transmembrane spans lie at 56–76 (GSLL…LTVA), 78–98 (PLLV…ALLI), and 99–119 (TGFL…SWIY). The interval 151 to 175 (AQYYGQQQTGGEDDRDRTRGTQHTT) is disordered.

This sequence belongs to the oleosin family.

The protein resides in the lipid droplet. Its subcellular location is the membrane. In terms of biological role, may have a structural role to stabilize the lipid body during desiccation of the seed by preventing coalescence of the oil. Probably interacts with both lipid and phospholipid moieties of lipid bodies. May also provide recognition signals for specific lipase anchorage in lipolysis during seedling growth. This Brassica napus (Rape) protein is Major oleosin NAP-II.